The sequence spans 570 residues: Eukaryotic translation initiation factor 2A (570 aa).

WD repeat units follow at residues 274-316 (EKKG…FDTI) and 318-358 (GPRN…EIIS). The disordered stretch occupies residues 468-526 (PPHLRKPLGGGGSAGPPSAAAPTPGNQNQRPAQPRANGNGNAPQPFRPQQSEQERKAFQ). Low complexity predominate over residues 482-492 (GPPSAAAPTPG). Residues 493-518 (NQNQRPAQPRANGNGNAPQPFRPQQS) show a composition bias toward polar residues. Residues 519-541 (EQERKAFQLKKKVEEIKVLKQRV) adopt a coiled-coil conformation.

The protein belongs to the WD repeat EIF2A family.

Functions in the early steps of protein synthesis of a small number of specific mRNAs. Acts by directing the binding of methionyl-tRNAi to 40S ribosomal subunits. In contrast to the eIF-2 complex, it binds methionyl-tRNAi to 40S subunits in a codon-dependent manner, whereas the eIF-2 complex binds methionyl-tRNAi to 40S subunits in a GTP-dependent manner. In Caenorhabditis elegans, this protein is Eukaryotic translation initiation factor 2A.